The chain runs to 268 residues: MSAVIEARHLSKRAGRAKLLDGVGLTVAAGEMVAIIGPNGAGKSTLLRLLSGDLRPSQGEVWLKQRDIGSYTPRELAARRAMLSQHINVTFPFTVEEIVLMGAGDRSAREAGRLVDAALDEVGLAHFRERQLPTLSGGEQQRAHFARVLVQLACGEAEHGPGLLLLDEPTSSLDLRHQIDLVEAARRRAGTGTAVIAILHDLNLAIRFADRLVVLSGGKLAADGPRTEVVTRETIRDIFEIDAVVHQADGVPYVLPQSMRAAASAARI.

Residues 5-242 (IEARHLSKRA…ETIRDIFEID (238 aa)) enclose the ABC transporter domain. 37-44 (GPNGAGKS) provides a ligand contact to ATP.

Belongs to the ABC transporter superfamily. Heme (hemin) importer (TC 3.A.1.14.5) family. As to quaternary structure, the complex is composed of two ATP-binding proteins (HmuV), two transmembrane proteins (HmuU) and a solute-binding protein (HmuT).

Its subcellular location is the cell inner membrane. In terms of biological role, part of the ABC transporter complex HmuTUV involved in hemin import. Responsible for energy coupling to the transport system. This chain is Hemin import ATP-binding protein HmuV, found in Bradyrhizobium diazoefficiens (strain JCM 10833 / BCRC 13528 / IAM 13628 / NBRC 14792 / USDA 110).